Consider the following 513-residue polypeptide: Maturase K (513 aa).

This sequence belongs to the intron maturase 2 family. MatK subfamily.

The protein resides in the plastid. Its subcellular location is the chloroplast. Usually encoded in the trnK tRNA gene intron. Probably assists in splicing its own and other chloroplast group II introns. The chain is Maturase K from Astrebla lappacea (Curly Mitchell grass).